Here is a 331-residue protein sequence, read N- to C-terminus: MKEFWVWVEPFDRKIVSVALEAGANAVVIPEKGRVEEVKKVGRITVIAPDGDLKLGEDVVYVLIKGKEDEERAAKYPPNVKVIVETTDWTVIPLENLIAQREELYAVVKNAQEAEVALQTLEKGVKGVVLKSRDINEIKKVGQIVSEHEEKLELVTIKITKILPLGLGDRVCVDTISLLHRGEGMLVGNSSGGMFLVHAETEENPYVAARPFRVNAGAVHMYIRVPNNRTKYLCELKAGDKVMVYDYKGRGRVTYVGRAKVERRPMLLIEGRYENKKLSCILQNAETIRLTKPDGTPISVSELKEGDEVLGYVEEAGRHFGMKVEETIIEK.

It belongs to the archaeal-type DHQ synthase family.

This Aquifex aeolicus (strain VF5) protein is 3-dehydroquinate synthase homolog.